We begin with the raw amino-acid sequence, 183 residues long: Ribosome-recycling factor (183 aa).

It belongs to the RRF family.

It localises to the cytoplasm. Responsible for the release of ribosomes from messenger RNA at the termination of protein biosynthesis. May increase the efficiency of translation by recycling ribosomes from one round of translation to another. This is Ribosome-recycling factor from Deinococcus radiodurans (strain ATCC 13939 / DSM 20539 / JCM 16871 / CCUG 27074 / LMG 4051 / NBRC 15346 / NCIMB 9279 / VKM B-1422 / R1).